The primary structure comprises 512 residues: Histidine ammonia-lyase (512 aa).

The segment at residues 142 to 144 (ASG) is a cross-link (5-imidazolinone (Ala-Gly)). Residue Ser-143 is modified to 2,3-didehydroalanine (Ser).

The protein belongs to the PAL/histidase family. Contains an active site 4-methylidene-imidazol-5-one (MIO), which is formed autocatalytically by cyclization and dehydration of residues Ala-Ser-Gly.

It is found in the cytoplasm. It carries out the reaction L-histidine = trans-urocanate + NH4(+). Its pathway is amino-acid degradation; L-histidine degradation into L-glutamate; N-formimidoyl-L-glutamate from L-histidine: step 1/3. The sequence is that of Histidine ammonia-lyase from Bartonella henselae (strain ATCC 49882 / DSM 28221 / CCUG 30454 / Houston 1) (Rochalimaea henselae).